We begin with the raw amino-acid sequence, 886 residues long: Alanine--tRNA ligase (886 aa).

The Zn(2+) site is built by His564, His568, Cys676, and His680.

Belongs to the class-II aminoacyl-tRNA synthetase family. It depends on Zn(2+) as a cofactor.

It is found in the cytoplasm. It carries out the reaction tRNA(Ala) + L-alanine + ATP = L-alanyl-tRNA(Ala) + AMP + diphosphate. In terms of biological role, catalyzes the attachment of alanine to tRNA(Ala) in a two-step reaction: alanine is first activated by ATP to form Ala-AMP and then transferred to the acceptor end of tRNA(Ala). Also edits incorrectly charged Ser-tRNA(Ala) and Gly-tRNA(Ala) via its editing domain. This chain is Alanine--tRNA ligase, found in Bartonella bacilliformis (strain ATCC 35685 / KC583 / Herrer 020/F12,63).